A 336-amino-acid polypeptide reads, in one-letter code: MKEPLKVACVQAAPVFLDLDATVDKTITLMEQAAAAGAGLIAFPETWIPGYPWFLWLDAPAWNMPLVQRYHQQSLVLDSVQARRISDAARHLGLYVVLGYSERNKASLYIGQWIIDDHGETVGVRRKLKATHVERTMFGEGDGASLRTFETPVGVLGALCCWEHLQPLSKYAMYAQNEQIHVAAWPSFSLYRNATSALGPEVNTAASRVYAAEGQCFVLAPCAIVSPEMIEMLCDSDAKRSLLQAGGGHARIFGPDGSDLATPLGEHEEGLLYATLDPAALTLAKVAADPAGHYSRPDVTRLMFNPNPTPCVVDLPDLPISSESIELLRPDIALEV.

The CN hydrolase domain maps to 5 to 278 (LKVACVQAAP…EGLLYATLDP (274 aa)). Glu45 acts as the Proton acceptor in catalysis. Lys127 (proton donor) is an active-site residue. The Nucleophile role is filled by Cys161.

Belongs to the carbon-nitrogen hydrolase superfamily. Nitrilase family.

It carries out the reaction a nitrile + 2 H2O = a carboxylate + NH4(+). The enzyme catalyses (indol-3-yl)acetonitrile + 2 H2O = (indol-3-yl)acetate + NH4(+). The catalysed reaction is phenylpropanonitrile + 2 H2O = 3-phenylpropanoate + NH4(+). Arylacetonitrilase which is capable of hydrolyzing indole-3-acetonitrile (IAN) to the plant hormone indole-3-acetate (IAA), and allows the plant pathogenic bacterium to use IAN as a sole nitrogen source. Is also able to hydrolyze phenylpropionitrile (PPN), allowing the use of this compound as a sole nitrogen source. This enzyme may represent an additional mechanism for IAA biosynthesis or may be used to degrade and assimilate aldoximes and nitriles produced during host plant secondary metabolism. The protein is Nitrilase of Pseudomonas syringae pv. syringae (strain B728a).